A 400-amino-acid polypeptide reads, in one-letter code: Chalcone synthase WHP1 (400 aa).

Cys-167 is an active-site residue.

The protein belongs to the thiolase-like superfamily. Chalcone/stilbene synthases family.

It catalyses the reaction (E)-4-coumaroyl-CoA + 3 malonyl-CoA + 3 H(+) = 2',4,4',6'-tetrahydroxychalcone + 3 CO2 + 4 CoA. It functions in the pathway secondary metabolite biosynthesis; flavonoid biosynthesis. In terms of biological role, the primary product of this enzyme is 4,2',4',6'-tetrahydroxychalcone (also termed naringenin-chalcone or chalcone) which can under specific conditions spontaneously isomerize into naringenin. In Zea mays (Maize), this protein is Chalcone synthase WHP1 (WHP1).